We begin with the raw amino-acid sequence, 178 residues long: Methylmalonyl-CoA epimerase, mitochondrial (178 aa).

Residues 1–38 constitute a mitochondrion transit peptide; it reads MRRVVKAAALAAGATGLFSRVQTSVAIGRSFSTPQSQF. The VOC domain maps to 49-178; that stretch reads RLNHVAVAVP…GGVLVELEQA (130 aa). H52 is a binding site for Co(2+). K116 carries the post-translational modification N6-succinyllysine. A Co(2+)-binding site is contributed by H124. K152 is modified (N6-acetyllysine; alternate). N6-succinyllysine; alternate is present on K152. E174 contacts Co(2+).

The protein belongs to the methylmalonyl-CoA epimerase family.

It is found in the mitochondrion. It carries out the reaction (R)-methylmalonyl-CoA = (S)-methylmalonyl-CoA. In terms of biological role, methylmalonyl-CoA epimerase involved in propionyl-CoA metabolism. This chain is Methylmalonyl-CoA epimerase, mitochondrial, found in Mus musculus (Mouse).